The chain runs to 61 residues: Small ribosomal subunit protein uS14 (61 aa).

Zn(2+) is bound by residues cysteine 24, cysteine 27, cysteine 40, and cysteine 43.

Belongs to the universal ribosomal protein uS14 family. Zinc-binding uS14 subfamily. Part of the 30S ribosomal subunit. Contacts proteins S3 and S10. It depends on Zn(2+) as a cofactor.

Functionally, binds 16S rRNA, required for the assembly of 30S particles and may also be responsible for determining the conformation of the 16S rRNA at the A site. This Clostridium novyi (strain NT) protein is Small ribosomal subunit protein uS14.